A 396-amino-acid chain; its full sequence is Lipid-A-disaccharide synthase (396 aa).

The protein belongs to the LpxB family.

It carries out the reaction a lipid X + a UDP-2-N,3-O-bis[(3R)-3-hydroxyacyl]-alpha-D-glucosamine = a lipid A disaccharide + UDP + H(+). It functions in the pathway bacterial outer membrane biogenesis; LPS lipid A biosynthesis. Its function is as follows. Condensation of UDP-2,3-diacylglucosamine and 2,3-diacylglucosamine-1-phosphate to form lipid A disaccharide, a precursor of lipid A, a phosphorylated glycolipid that anchors the lipopolysaccharide to the outer membrane of the cell. The sequence is that of Lipid-A-disaccharide synthase from Hahella chejuensis (strain KCTC 2396).